We begin with the raw amino-acid sequence, 411 residues long: Putative glycosyltransferase SCO3672 (411 aa).

The next 10 helical transmembrane spans lie at isoleucine 7–leucine 27, proline 45–glycine 65, valine 70–leucine 90, glutamate 120–phenylalanine 140, glycine 148–glutamate 168, leucine 169–leucine 189, isoleucine 197–leucine 217, glycine 227–leucine 247, glycine 277–histidine 297, and valine 301–leucine 321.

Belongs to the glycosyltransferase 4 family.

Its subcellular location is the cell membrane. The polypeptide is Putative glycosyltransferase SCO3672 (Streptomyces coelicolor (strain ATCC BAA-471 / A3(2) / M145)).